Reading from the N-terminus, the 514-residue chain is HERV-H LTR-associating protein 1 homolog (514 aa).

Positions 1-29 (MQSFLLHCPPIRLCMGLACILFLWNAVSG) are cleaved as a signal peptide. N-linked (GlcNAc...) asparagine glycans are attached at residues Asn58, Asn97, Asn139, Asn161, Asn179, Asn200, Asn217, Asn232, and Asn321. The interval 379–420 (LHPTGILTTPSRLAQPSRASGTLMPGTQTTNPTQAPAPRVPQ) is disordered. A compositionally biased stretch (polar residues) spans 384-398 (ILTTPSRLAQPSRAS). A compositionally biased stretch (low complexity) spans 403–415 (PGTQTTNPTQAPA).

It localises to the secreted. The protein is HERV-H LTR-associating protein 1 homolog (Hhla1) of Mus musculus (Mouse).